We begin with the raw amino-acid sequence, 348 residues long: MKETKITYKDAGVDIDAGNTFVQMIKPLVKATSRPEVLADIGGFGGLFSLNMGKYKHPVLVSGTDGVGTKLKLAFLADRHDTIGIDLVAMCVNDIIVQGAEPLFFLDYLATAKLDPAKAASIIKGVSEGCVQAGCALIGGETAEMPGFYTGDEYDMAGFAVGVVEREKIIDGSSITVGNRLIGLASSGLHSNGYSLARKVILEHMGLGIDDQLPGLGKTVAEELLTPTRIYVRSVMNLLRDFNVSGLAHITGGGLLENIPRVLPNGCKAVIKKDSWDVPEIFRIMQKAGNIEENEMFRTFNCGIGMVLVVPEKESEEIMIRLSGLNETAFVIGEVAKCDAGKECVDLV.

The protein belongs to the AIR synthase family.

It is found in the cytoplasm. The enzyme catalyses 2-formamido-N(1)-(5-O-phospho-beta-D-ribosyl)acetamidine + ATP = 5-amino-1-(5-phospho-beta-D-ribosyl)imidazole + ADP + phosphate + H(+). It participates in purine metabolism; IMP biosynthesis via de novo pathway; 5-amino-1-(5-phospho-D-ribosyl)imidazole from N(2)-formyl-N(1)-(5-phospho-D-ribosyl)glycinamide: step 2/2. The sequence is that of Phosphoribosylformylglycinamidine cyclo-ligase from Citrifermentans bemidjiense (strain ATCC BAA-1014 / DSM 16622 / JCM 12645 / Bem) (Geobacter bemidjiensis).